The following is a 147-amino-acid chain: Myoglobin (147 aa).

A Globin domain is found at 2 to 137 (ADFEMVLKHW…VMTTIIADIE (136 aa)). His60 contributes to the nitrite binding site. His60 lines the O2 pocket. Heme b is bound at residue His89.

Belongs to the globin family. In terms of assembly, monomeric.

It localises to the cytoplasm. The protein localises to the sarcoplasm. The enzyme catalyses Fe(III)-heme b-[protein] + nitric oxide + H2O = Fe(II)-heme b-[protein] + nitrite + 2 H(+). It carries out the reaction H2O2 + AH2 = A + 2 H2O. Monomeric heme protein which primary function is to store oxygen and facilitate its diffusion within muscle tissues. Reversibly binds oxygen through a pentacoordinated heme iron and enables its timely and efficient release as needed during periods of heightened demand. Depending on the oxidative conditions of tissues and cells, and in addition to its ability to bind oxygen, it also has a nitrite reductase activity whereby it regulates the production of bioactive nitric oxide. Under stress conditions, like hypoxia and anoxia, it also protects cells against reactive oxygen species thanks to its pseudoperoxidase activity. The polypeptide is Myoglobin (mb) (Makaira nigricans (Atlantic blue marlin)).